A 394-amino-acid polypeptide reads, in one-letter code: Acetate kinase (394 aa).

Residue Asn8 participates in Mg(2+) binding. Lys15 contacts ATP. Arg86 contacts substrate. Asp143 serves as the catalytic Proton donor/acceptor. ATP-binding positions include 201-205, 276-278, and 324-328; these read HLGNG, DCR, and GIGEN. Residue Glu378 coordinates Mg(2+).

The protein belongs to the acetokinase family. In terms of assembly, homodimer. The cofactor is Mg(2+). Requires Mn(2+) as cofactor.

The protein localises to the cytoplasm. It carries out the reaction acetate + ATP = acetyl phosphate + ADP. It participates in metabolic intermediate biosynthesis; acetyl-CoA biosynthesis; acetyl-CoA from acetate: step 1/2. Functionally, catalyzes the formation of acetyl phosphate from acetate and ATP. Can also catalyze the reverse reaction. The polypeptide is Acetate kinase (Dichelobacter nodosus (strain VCS1703A)).